Reading from the N-terminus, the 783-residue chain is Putative ATP-dependent DNA helicase fml2 (783 aa).

Residues 118–286 (FCEQALFHNL…KVVDCLHISK (169 aa)) form the Helicase ATP-binding domain. 131–138 (LPTGLGKT) lines the ATP pocket. A DEAH box motif is present at residues 234–237 (DEAH). A Helicase C-terminal domain is found at 450-619 (KMNHLLELLK…GKKIALKKDV (170 aa)).

Belongs to the DEAD box helicase family. DEAH subfamily. FANCM sub-subfamily.

It is found in the nucleus. The protein resides in the nucleolus. The catalysed reaction is ATP + H2O = ADP + phosphate + H(+). The protein is Putative ATP-dependent DNA helicase fml2 of Schizosaccharomyces pombe (strain 972 / ATCC 24843) (Fission yeast).